Reading from the N-terminus, the 160-residue chain is uncharacterized protein (160 aa).

The helical transmembrane segment at 8–28 (LLFILVFISGFILFTVYSYTA) threads the bilayer.

The protein resides in the membrane. This is an uncharacterized protein from Escherichia coli (strain K12).